Consider the following 719-residue polypeptide: Serine/threonine-protein kinase CBK1 (719 aa).

Disordered stretches follow at residues 1–75 and 100–219; these read MFGQ…GAGF and MQQQ…QTSG. Residues 24–38 are compositionally biased toward polar residues; it reads QFSSAYMEQQGSHQS. The span at 40–63 shows a compositional bias: low complexity; sequence QEHLAYEQLQLQQQQQQQQQHAAA. 3 stretches are compositionally biased toward polar residues: residues 112 to 130, 139 to 157, and 181 to 219; these read ATSIYSQNNNSFTNVNDTT, GHYSNSSDYSGQQPASSAY, and GDQTLVGNQSSQGAMLSRQSLQCSSVPQSPNGGQRQTSG. Positions 310-631 constitute a Protein kinase domain; it reads FHTVKVIGKG…ANEIKNHPFF (322 aa). ATP contacts are provided by residues 316-324 and Lys339; that span reads IGKGAFGEV. Asp433 functions as the Proton acceptor in the catalytic mechanism. Residues 632-717 enclose the AGC-kinase C-terminal domain; sequence RGVDWETIRQ…SRFDYLTRKN (86 aa).

The protein belongs to the protein kinase superfamily. STE Ser/Thr protein kinase family. COT1 subfamily.

The catalysed reaction is L-seryl-[protein] + ATP = O-phospho-L-seryl-[protein] + ADP + H(+). It carries out the reaction L-threonyl-[protein] + ATP = O-phospho-L-threonyl-[protein] + ADP + H(+). Functionally, protein kinase that seems to play a role in the regulation of cell morphogenesis and proliferation. In Eremothecium gossypii (strain ATCC 10895 / CBS 109.51 / FGSC 9923 / NRRL Y-1056) (Yeast), this protein is Serine/threonine-protein kinase CBK1 (CBK1).